A 370-amino-acid polypeptide reads, in one-letter code: F-box/kelch-repeat protein At4g38940 (370 aa).

The 47-residue stretch at 18–64 folds into the F-box domain; sequence PCLISLLPEEIVVDIVARVPRCYYPTLSQVSRRFRSLVASPEIYKRR. 3 Kelch repeats span residues 131 to 177, 178 to 230, and 263 to 315; these read NIFV…LIDR, KIYV…VIGG, and SACV…SYTG.

In terms of assembly, part of a SCF (ASK-cullin-F-box) protein ligase complex. Interacts with SKP1A/ASK1, SKP1B/ASK2, ASK11, ASK13 and ASK18.

It is found in the nucleus. Its pathway is protein modification; protein ubiquitination. Functionally, component of SCF(ASK-cullin-F-box) E3 ubiquitin ligase complexes, which may mediate the ubiquitination and subsequent proteasomal degradation of target proteins. In Arabidopsis thaliana (Mouse-ear cress), this protein is F-box/kelch-repeat protein At4g38940.